The sequence spans 505 residues: Deoxyguanosinetriphosphate triphosphohydrolase (505 aa).

The region spanning 66–273 is the HD domain; that stretch reads RLTHSMEVQQ…MEAADDISYC (208 aa).

This sequence belongs to the dGTPase family. Type 1 subfamily. In terms of assembly, homotetramer. Requires Mg(2+) as cofactor.

It carries out the reaction dGTP + H2O = 2'-deoxyguanosine + triphosphate + H(+). With respect to regulation, inhibited by the action of reducing agents such as dithiothreitol and 2-mercaptoethanol. Functionally, dGTPase preferentially hydrolyzes dGTP over the other canonical NTPs. The protein is Deoxyguanosinetriphosphate triphosphohydrolase of Shigella boydii.